Consider the following 272-residue polypeptide: Nitrogenase iron protein (272 aa).

Residue 8-15 (GKGGIGKS) participates in ATP binding. Cys94 provides a ligand contact to [4Fe-4S] cluster. Position 97 is an ADP-ribosylarginine; by dinitrogenase reductase ADP-ribosyltransferase (Arg97). Cys129 contributes to the [4Fe-4S] cluster binding site.

This sequence belongs to the NifH/BchL/ChlL family. In terms of assembly, homodimer. [4Fe-4S] cluster serves as cofactor. Post-translationally, the reversible ADP-ribosylation of Arg-97 inactivates the nitrogenase reductase and regulates nitrogenase activity.

The catalysed reaction is N2 + 8 reduced [2Fe-2S]-[ferredoxin] + 16 ATP + 16 H2O = H2 + 8 oxidized [2Fe-2S]-[ferredoxin] + 2 NH4(+) + 16 ADP + 16 phosphate + 6 H(+). Its function is as follows. The key enzymatic reactions in nitrogen fixation are catalyzed by the nitrogenase complex, which has 2 components: the iron protein and the molybdenum-iron protein. The polypeptide is Nitrogenase iron protein (Alkaliphilus metalliredigens (strain QYMF)).